A 143-amino-acid chain; its full sequence is Transcriptional regulator MraZ (143 aa).

SpoVT-AbrB domains are found at residues 5 to 47 (QYEH…SLEE) and 76 to 119 (AVEC…SKEV).

This sequence belongs to the MraZ family. As to quaternary structure, forms oligomers.

Its subcellular location is the cytoplasm. The protein resides in the nucleoid. The sequence is that of Transcriptional regulator MraZ from Thermoanaerobacter pseudethanolicus (strain ATCC 33223 / 39E) (Clostridium thermohydrosulfuricum).